The primary structure comprises 485 residues: Noelin (485 aa).

A signal peptide spans 1-16; sequence MSVPLLKIGVVLSTMA. N-linked (GlcNAc...) asparagine glycosylation is found at N33, N103, N187, N288, N307, N394, N431, and N473. A coiled-coil region spans residues 87–225; sequence RDARTKQLRQ…ERLRACMQKL (139 aa). Residues 226 to 478 form the Olfactomedin-like domain; sequence ACGKLTGISD…QILYNVTLFH (253 aa). A disulfide bridge links C227 with C409.

Homotetramer; disulfide-linked. Dimer of dimers, giving rise to a V-shaped homotretramer. Isoform 1 and isoform 3 interact with RTN4R. Identified in a complex with RTN4R and LINGO1. Peripherally associated with AMPAR complex. AMPAR complex consists of an inner core made of 4 pore-forming GluA/GRIA proteins (GRIA1, GRIA2, GRIA3 and GRIA4) and 4 major auxiliary subunits arranged in a twofold symmetry. One of the two pairs of distinct binding sites is occupied either by CNIH2, CNIH3 or CACNG2, CACNG3. The other harbors CACNG2, CACNG3, CACNG4, CACNG8 or GSG1L. This inner core of AMPAR complex is complemented by outer core constituents binding directly to the GluA/GRIA proteins at sites distinct from the interaction sites of the inner core constituents. Outer core constituents include at least PRRT1, PRRT2, CKAMP44/SHISA9, FRRS1L and NRN1. The proteins of the inner and outer core serve as a platform for other, more peripherally associated AMPAR constituents, including OLFM1. Alone or in combination, these auxiliary subunits control the gating and pharmacology of the AMPAR complex and profoundly impact their biogenesis and protein processing. Interacts with OLFM2.

It is found in the secreted. Its subcellular location is the synapse. The protein localises to the endoplasmic reticulum. It localises to the cell projection. The protein resides in the axon. It is found in the perikaryon. Contributes to the regulation of axonal growth in the embryonic and adult central nervous system by inhibiting interactions between RTN4R and LINGO1. Inhibits RTN4R-mediated axon growth cone collapse. May play an important role in regulating the production of neural crest cells by the neural tube. May be required for normal responses to olfactory stimuli. This is Noelin (OLFM1) from Homo sapiens (Human).